A 297-amino-acid polypeptide reads, in one-letter code: Aspartate dehydrogenase domain-containing protein (297 aa).

Phosphoserine occurs at positions 24 and 172.

This sequence belongs to the L-aspartate dehydrogenase family.

The polypeptide is Aspartate dehydrogenase domain-containing protein (Rattus norvegicus (Rat)).